Consider the following 147-residue polypeptide: Large ribosomal subunit protein uL15 (147 aa).

The segment covering 1–13 (MELHSLKAAEGSR) has biased composition (basic and acidic residues). Residues 1 to 57 (MELHSLKAAEGSRKVRNRVGRGTSSGNGKTSGRGQKGQKSRSGGGVRPGFEGGQTEL) form a disordered region. Gly residues-rich tracts occupy residues 23–35 (TSSGNGKTSGRGQ) and 42–52 (SGGGVRPGFEG).

It belongs to the universal ribosomal protein uL15 family. As to quaternary structure, part of the 50S ribosomal subunit.

Its function is as follows. Binds to the 23S rRNA. This is Large ribosomal subunit protein uL15 from Lactococcus lactis subsp. cremoris (strain MG1363).